The primary structure comprises 777 residues: Androgen receptor (777 aa).

The tract at residues 1–416 (MEVHIGLGGV…IDYYFPPQKP (416 aa)) is modulating. Disordered regions lie at residues 53-95 (CVHP…QAPQ), 110-132 (GEQG…YPES), and 205-241 (RRAG…LSEP). NR C4-type zinc fingers lie at residues 417 to 434 (CLSC…ALTC) and 453 to 472 (CASR…CPSC). Positions 417–489 (CLSCEDEASG…AGMTLGARKL (73 aa)) form a DNA-binding region, nuclear receptor. The NR LBD domain occupies 526 to 757 (SCQPIFLNVL…DFPEMMSEII (232 aa)). Residues asparagine 563, arginine 610, and threonine 735 each coordinate 17beta-hydroxy-5alpha-androstan-3-one.

This sequence belongs to the nuclear hormone receptor family. NR3 subfamily. In terms of assembly, binds DNA as a homodimer. Interacts via the ligand-binding domain with LXXLL and FXXLF motifs from coactivator proteins. Interacts (via ligand-binding domain) with TRIM68. As to expression, detected in somatic Leydig and Sertoli cells in testis with high level expression. Also detected at lower expression levels in forebrain and heart.

It is found in the nucleus. It localises to the cytoplasm. Its function is as follows. Steroid hormone receptors are ligand-activated transcription factors that regulate eukaryotic gene expression and affect cellular proliferation and differentiation in target tissues. Transcription factor activity is modulated by bound coactivator and corepressor proteins. The chain is Androgen receptor (ar) from Aquarana catesbeiana (American bullfrog).